We begin with the raw amino-acid sequence, 5412 residues long: Mucin-4 (5412 aa).

The signal sequence occupies residues 1 to 28; sequence MKGARWRRVPWVSLSCLCLCLLPHVVPG. 2 disordered regions span residues 40-87 and 142-249; these read TAAP…TTSK and TSTD…ATSS. A variable number of tandem repeats (VNTR) region spans residues 43 to 4241; the sequence is PVTSTGSTTA…SVSTGHATPL (4199 aa). The segment covering 142–163 has biased composition (low complexity); sequence TSTDSTLGNTEETSTAGTESST. O-linked (GalNAc...) threonine glycosylation is found at Thr154 and Thr156. Residues 164–199 show a composition bias toward polar residues; that stretch reads PVTSAVSITAGQEGQSRTTSWRTSIQDTSASSQNHW. The segment covering 200 to 223 has biased composition (low complexity); sequence TRSTQTTRESQTSTLTHRTTSTPS. Over residues 224–249 the composition is skewed to polar residues; it reads FSPSVHNVTGTVSQKTSPSGETATSS. Asn230 carries an N-linked (GlcNAc...) asparagine glycan. An O-linked (GalNAc...) threonine glycan is attached at Thr234. Asn255 carries N-linked (GlcNAc...) asparagine glycosylation. Polar residues-rich tracts occupy residues 267–285, 306–328, and 358–367; these read TTST…SVPV, SPAT…HQTQ, and GFNPSGTVSQ. Disordered stretches follow at residues 267-286, 303-328, 353-383, 438-473, 488-580, 592-853, 868-963, 983-1864, 1878-2078, 2111-2220, 2232-2814, 2837-3306, 3320-3580, 3592-3644, 3656-3756, and 3769-4223; these read TTST…VPVT, EGQS…HQTQ, LSSP…PSSV, LSPS…SFSP, WPSS…ALLS, TATS…ASAS, VPGT…SGSG, SSAS…DASS, ASSV…TGHA, TALH…ASTG, SAST…TGHA, IPSS…SSVS, SAST…VSTG, SVST…VSTG, SVST…ASTG, and VSTG…GHAT. Residues Thr364, Thr369, and Thr376 are each glycosylated (O-linked (GalNAc...) threonine). Positions 368–383 are enriched in low complexity; the sequence is ETFPSGETTTSSPSSV. 3 stretches are compositionally biased toward polar residues: residues 450 to 459, 488 to 526, and 546 to 557; these read AFHTQQSEGA, WPSS…TGTA, and TTYSSHSTTLPK. 2 stretches are compositionally biased toward low complexity: residues 558–577 and 615–627; these read TTGA…TGEA and STNH…TSTS. A glycan (N-linked (GlcNAc...) asparagine) is linked at Asn617. O-linked (GalNAc...) threonine glycans are attached at residues Thr620, Thr666, and Thr688. The span at 628-677 shows a compositional bias: polar residues; sequence PQESPAVSQRGHTQAPQTTQESQTTRSVSPMTDTKTVTTPGSSFTASGHS. A compositionally biased stretch (low complexity) spans 705–717; the sequence is TTQAPTTALQAAP. Residues 729 to 746 are compositionally biased toward polar residues; it reads GTSLSKTGALTLANSVVS. Thr747 carries O-linked (GalNAc...) threonine glycosylation. The segment covering 756 to 771 has biased composition (low complexity); sequence TSASASTSPDTAAAMT. Residues 772–789 show a composition bias toward polar residues; sequence HTHQAESTEASGQTQTSE. Residues 790 to 828 show a composition bias toward low complexity; it reads PASSGSRTTSAGTATPSSSGASGTTPSGSEGISTSGETT. O-linked (GalNAc...) threonine glycans are attached at residues Thr797, Thr798, Thr802, Thr804, Thr813, and Thr814. Polar residues predominate over residues 829–852; the sequence is RFSSNPSRDSHTTQSTTELLSASA. Thr881, Thr886, and Thr892 each carry an O-linked (GalNAc...) threonine glycan. The segment covering 885 to 903 has biased composition (low complexity); sequence PTGQSSPTSPSASPQETAA. The segment covering 907 to 928 has biased composition (polar residues); that stretch reads MAQTQRTRTSRGSDTISLASQA. The span at 929 to 950 shows a compositional bias: low complexity; it reads TDTFSTVPPTPPSITSTGLTSP. O-linked (GalNAc...) threonine glycans are attached at residues Thr931, Thr934, Thr938, Thr943, Thr945, Thr948, Thr952, Thr954, Thr1003, Thr1007, Thr1012, Thr1019, Thr1022, Thr1023, Thr1028, Thr1030, Thr1035, Thr1039, Thr1044, Thr1051, Thr1055, Thr1060, Thr1062, Thr1067, Thr1071, Thr1076, Thr1083, Thr1086, Thr1087, Thr1092, Thr1094, Thr1099, Thr1103, Thr1108, Thr1110, Thr1115, Thr1118, Thr1119, Thr1124, Thr1126, Thr1131, Thr1135, Thr1172, Thr1179, Thr1182, Thr1183, Thr1188, Thr1195, Thr1199, Thr1204, Thr1236, Thr1243, Thr1246, and Thr1247. Positions 951-963 are enriched in polar residues; the sequence is QTETHTLSPSGSG. A compositionally biased stretch (low complexity) spans 1007–1024; that stretch reads TPLPVTSPSSVSTGHTTP. Positions 1028 to 1054 are enriched in polar residues; sequence TDTSSESTGHVTPLPVTSFSSASTGDS. Polar residues predominate over residues 1060–1086; the sequence is TDTSSASTGHVTPLPVTSLSSASTGDT. Residues 1092 to 1118 are compositionally biased toward polar residues; the sequence is TDTSSASTGHATSLPVTDTSSVSTGHT. Polar residues-rich tracts occupy residues 1124–1150 and 1157–1197; these read TDTS…TGHT and DASS…STGH. Polar residues-rich tracts occupy residues 1204 to 1213 and 1221 to 1246; these read TDTSSASTGH and DASS…TGHT. The span at 1252–1262 shows a compositional bias: polar residues; it reads TDTSSASTGQA. Residues 1263 to 1279 show a composition bias toward low complexity; the sequence is TSLLVTDTSSVSTGDTT. O-linked (GalNAc...) threonine glycosylation is found at Thr1278, Thr1279, Thr1284, Thr1286, Thr1291, Thr1295, Thr1300, Thr1307, Thr1311, Thr1316, Thr1323, Thr1326, Thr1332, Thr1339, Thr1342, Thr1343, and Thr1348. Residues 1281–1325 are compositionally biased toward polar residues; it reads LPVTSTSSASTGHVTPLHVTSPSSASTGHATPLPVTSLSSASTGD. Positions 1332–1342 are enriched in polar residues; the sequence is TSPSSASTGDT. Composition is skewed to polar residues over residues 1349 to 1358 and 1365 to 1405; these read DASSVSTGHT and DASS…STGH. 12 O-linked (GalNAc...) threonine glycosylation sites follow: Thr1380, Thr1387, Thr1390, Thr1391, Thr1396, Thr1403, Thr1407, Thr1412, Thr1444, Thr1451, Thr1454, and Thr1455. 2 stretches are compositionally biased toward polar residues: residues 1412 to 1421 and 1429 to 1454; these read TDTSSASTGH and DASS…TGHT. The segment covering 1460–1470 has biased composition (polar residues); it reads TDTSSASTGQA. Positions 1471 to 1487 are enriched in low complexity; that stretch reads TSLLVTDTSSVSTGDTT. Thr1486, Thr1487, Thr1492, Thr1494, Thr1499, Thr1503, Thr1508, Thr1515, Thr1519, Thr1524, Thr1531, Thr1534, Thr1540, Thr1547, Thr1550, Thr1551, Thr1556, Thr1563, Thr1566, Thr1567, Thr1572, Thr1579, Thr1582, Thr1583, Thr1588, Thr1590, Thr1598, Thr1599, Thr1604, Thr1611, Thr1614, Thr1615, Thr1620, Thr1622, Thr1627, and Thr1630 each carry an O-linked (GalNAc...) threonine glycan. The segment covering 1489-1533 has biased composition (polar residues); sequence LPVTSTSSASTGHVTPLHVTSPSSASTGHATPLPVTSLSSASTGD. The segment covering 1540–1550 has biased composition (polar residues); that stretch reads TSPSSASTGDT. Residues 1557–1582 are compositionally biased toward polar residues; the sequence is DASSVSTGHTTPLPVTSPSSASTGHT. Polar residues predominate over residues 1588-1614; the sequence is TDTSSASKGDTTPLPVTSPSSASTGHT. Over residues 1620–1631 the composition is skewed to low complexity; the sequence is TDTSSASTGDTT. Positions 1633-1661 are enriched in polar residues; sequence LPVTNASSLSTGHATPLHVTSPSSASTGH. N-linked (GlcNAc...) asparagine glycosylation occurs at Asn1637. 24 O-linked (GalNAc...) threonine glycosylation sites follow: Thr1659, Thr1663, Thr1668, Thr1670, Thr1675, Thr1679, Thr1716, Thr1723, Thr1726, Thr1727, Thr1732, Thr1764, Thr1766, Thr1812, Thr1819, Thr1822, Thr1823, Thr1828, Thr1835, Thr1838, Thr1839, Thr1844, Thr1854, and Thr1855. Positions 1668–1679 are enriched in low complexity; it reads TSTSSASTGHAT. Composition is skewed to polar residues over residues 1701–1741, 1749–1773, and 1812–1822; these read DVSS…STGH, DASS…STAH, and TSPSSASTGDT. Residues 1828–1840 are compositionally biased toward low complexity; the sequence is TDASSASTGDTTS. Polar residues-rich tracts occupy residues 1841–1864, 1892–1902, and 1909–1950; these read LPVT…DASS, TDTNSASTGDT, and DASS…SGHT. 44 O-linked (GalNAc...) threonine glycosylation sites follow: Thr1931, Thr1934, Thr1935, Thr1940, Thr1950, Thr1951, Thr1956, Thr1963, Thr1995, Thr1999, Thr2004, Thr2006, Thr2015, Thr2020, Thr2027, Thr2030, Thr2031, Thr2036, Thr2038, Thr2047, Thr2052, Thr2062, Thr2063, Thr2132, Thr2137, Thr2139, Thr2142, Thr2143, Thr2148, Thr2150, Thr2155, Thr2159, Thr2164, Thr2180, Thr2182, Thr2187, Thr2191, Thr2196, Thr2198, Thr2203, Thr2207, Thr2244, Thr2254, and Thr2255. The span at 1957–1981 shows a compositional bias: polar residues; it reads DASSVPTGHATSLPVTDASSVSTGH. Residues 2004–2030 show a composition bias toward polar residues; sequence TDTSSVSTGQATPLPVTSLSSASTGDT. A compositionally biased stretch (polar residues) spans 2036–2077; that stretch reads TDTSSASTGQDTPLPVTSLSSVSTGDTTPLPVTNPSSASTGH. The span at 2125–2146 shows a compositional bias: low complexity; that stretch reads DTTPLPVTSPSSTSTGDTTPLP. Residues 2148–2189 are compositionally biased toward polar residues; that stretch reads TETSSVSTGHATSLPVTDTSSASTGHATSLPVTDTSSASTGH. Polar residues-rich tracts occupy residues 2196–2219 and 2232–2254; these read TDTS…SAST and SAST…TGDT. The span at 2261 to 2270 shows a compositional bias: polar residues; sequence DASSVSTGHA. The segment covering 2271-2283 has biased composition (low complexity); sequence TSLPVTSLSSVST. Residues Thr2283, Thr2286, Thr2287, Thr2292, Thr2299, Thr2303, Thr2308, Thr2324, Thr2331, Thr2334, Thr2335, Thr2340, Thr2347, Thr2351, Thr2356, Thr2363, Thr2366, Thr2367, Thr2372, Thr2382, Thr2383, Thr2388, Thr2395, Thr2398, Thr2399, and Thr2406 are each glycosylated (O-linked (GalNAc...) threonine). Positions 2284–2301 are enriched in polar residues; it reads GDTTPLPVTSPSSASTGH. Residues 2309 to 2349 show a composition bias toward polar residues; that stretch reads DASSASTGHATPLPVTSLSSASTGDTTPLPVTSPSSASTGH. The segment covering 2366–2399 has biased composition (low complexity); the sequence is TTPLPVTSSSSASSGHTTPLPVTDASSASTGDTT. 2 stretches are compositionally biased toward polar residues: residues 2404–2413 and 2421–2445; these read TDTSSASTGH and GLSS…STGH. N-linked (GlcNAc...) asparagine glycosylation occurs at Asn2437. O-linked (GalNAc...) threonine glycosylation is found at Thr2452, Thr2454, Thr2459, Thr2462, Thr2463, Thr2468, Thr2500, Thr2507, Thr2510, Thr2511, Thr2516, Thr2518, Thr2523, and Thr2526. A compositionally biased stretch (low complexity) spans 2452-2471; the sequence is TSTSSASTGDTTPLPGTDTS. Polar residues predominate over residues 2485 to 2510; that stretch reads DASSVSTGDTTRLPVTSPSSASTGHT. The span at 2517 to 2573 shows a compositional bias: polar residues; sequence DTPSASTGDTTPLPVTNASSLSTRHATSLHVTSPSSASTGHATSLPVTDTSAASTGH. Asn2533 carries N-linked (GlcNAc...) asparagine glycosylation. Thr2564, Thr2566, Thr2571, Thr2575, Thr2580, Thr2582, Thr2587, Thr2590, Thr2591, Thr2596, Thr2598, Thr2619, Thr2622, Thr2623, Thr2628, Thr2660, Thr2667, Thr2670, Thr2671, Thr2676, Thr2683, Thr2687, Thr2692, and Thr2694 each carry an O-linked (GalNAc...) threonine glycan. Low complexity predominate over residues 2580-2591; the sequence is TSTSSASTGDTT. Polar residues-rich tracts occupy residues 2597 to 2637 and 2645 to 2691; these read DTYS…STGH and DASS…SLPV. Residues 2692-2704 are compositionally biased toward low complexity; that stretch reads TDTSSASTGDTTS. Polar residues predominate over residues 2705–2723; it reads LPVTDTSSAYTGDTTSLPV. The span at 2724–2735 shows a compositional bias: low complexity; sequence TDTSSSSTGDTT. O-linked (GalNAc...) threonine glycosylation is found at Thr2740, Thr2742, Thr2750, Thr2751, Thr2756, Thr2758, Thr2763, and Thr2767. The span at 2740 to 2750 shows a compositional bias: polar residues; that stretch reads TETSSVSTGDT. The span at 2756–2798 shows a compositional bias: polar residues; it reads TDTSSASTGHATPLPVTNTSSVSTGHATPLHVTSPSSASTGHT. Residue Asn2773 is glycosylated (N-linked (GlcNAc...) asparagine). Thr2779, Thr2783, Thr2788, Thr2795, Thr2798, Thr2799, and Thr2804 each carry an O-linked (GalNAc...) threonine glycan. Composition is skewed to polar residues over residues 2805–2814 and 2837–2846; these read DASSVSTGHA and IPSSASSGHT. O-linked (GalNAc...) threonine glycans are attached at residues Thr2846, Thr2847, and Thr2852. Residues 2853 to 2877 show a composition bias toward polar residues; it reads DASSVSTGHATSLPVTDASSVSTGH. Low complexity predominate over residues 2895–2907; that stretch reads TPLPLTSLSSVST. Thr2910, Thr2911, Thr2916, Thr2918, Thr2923, Thr2927, Thr2932, Thr2939, Thr2942, Thr2943, Thr2948, Thr2950, Thr2955, Thr2959, Thr2966, Thr2971, and Thr2975 each carry an O-linked (GalNAc...) threonine glycan. Polar residues predominate over residues 2916-2942; it reads TDTSSASTGQATPLPVTSLSSVSTGDT. Positions 2948-2973 are enriched in polar residues; the sequence is TDTSSASTGHATSLPVTDTSSASTGH. Composition is skewed to polar residues over residues 2980–2989 and 3009–3037; these read TDTSSASTGH and LPVT…STGH. Thr3023, Thr3028, Thr3035, and Thr3039 each carry an O-linked (GalNAc...) threonine glycan. The segment covering 3044–3069 has biased composition (polar residues); that stretch reads TDTSSASTGHANPLHVTSPSSASTGH. Thr3071, Thr3076, Thr3078, Thr3083, Thr3087, Thr3092, Thr3099, Thr3102, Thr3103, Thr3108, Thr3115, Thr3118, Thr3119, Thr3124, Thr3126, Thr3131, Thr3135, Thr3140, Thr3142, Thr3147, Thr3150, Thr3151, Thr3156, Thr3158, Thr3163, Thr3167, Thr3172, Thr3179, Thr3182, Thr3183, Thr3188, Thr3220, Thr3227, Thr3230, Thr3231, Thr3236, Thr3243, Thr3247, Thr3252, and Thr3254 each carry an O-linked (GalNAc...) threonine glycan. Residues 3076-3118 show a composition bias toward polar residues; sequence TDTSSASTGHATPLPVTSLSSVSTGDTTPLPVTSPSSASTGHT. Positions 3124–3134 are enriched in polar residues; it reads TDTSSASTGQA. The segment covering 3140–3151 has biased composition (low complexity); the sequence is TSTSSASTGDTT. 2 stretches are compositionally biased toward polar residues: residues 3156-3197 and 3205-3251; these read TDTS…STGH and DASS…SLPV. A compositionally biased stretch (low complexity) spans 3252–3264; the sequence is TDTSSASTGDTTS. Residues 3265–3283 are compositionally biased toward polar residues; sequence LPVTDTSSAYTGDTTSLPV. A compositionally biased stretch (low complexity) spans 3284 to 3295; the sequence is TDTSSSSTGDTT. 9 O-linked (GalNAc...) threonine glycosylation sites follow: Thr3294, Thr3332, Thr3339, Thr3342, Thr3343, Thr3348, Thr3350, Thr3355, and Thr3359. Positions 3320 to 3337 are enriched in polar residues; the sequence is SASTGHATPLHVTSPSSA. Over residues 3338-3356 the composition is skewed to low complexity; that stretch reads STGDTTPVPVTDTSSVSTG. Polar residues-rich tracts occupy residues 3365 to 3374 and 3381 to 3405; these read GLSSASTGDT and DISS…STGD. Asn3397 carries N-linked (GlcNAc...) asparagine glycosylation. Thr3398, Thr3403, Thr3406, Thr3412, Thr3419, Thr3423, Thr3428, Thr3430, Thr3435, Thr3439, and Thr3444 each carry an O-linked (GalNAc...) threonine glycan. Residues 3412-3421 show a composition bias toward polar residues; the sequence is TSPSSASTGH. Over residues 3428–3471 the composition is skewed to low complexity; it reads TSTSSASTGHATPVPVTSTSSASTGHTTPLPVTDTSSASTGDTT. O-linked (GalNAc...) serine glycosylation is present at Ser3445. O-linked (GalNAc...) threonine glycosylation is found at Thr3446, Thr3451, Thr3454, Thr3455, Thr3460, Thr3462, Thr3467, Thr3470, Thr3471, Thr3476, Thr3483, Thr3486, Thr3487, Thr3492, Thr3499, Thr3502, Thr3504, Thr3508, Thr3515, Thr3519, Thr3524, Thr3526, Thr3531, Thr3535, Thr3540, Thr3547, Thr3550, Thr3551, Thr3556, Thr3567, Thr3614, Thr3615, Thr3622, Thr3678, Thr3679, Thr3686, Thr3691, Thr3695, Thr3700, Thr3710, Thr3711, Thr3716, Thr3718, Thr3723, Thr3727, Thr3732, Thr3739, Thr3743, Thr3748, Thr3780, Thr3787, Thr3790, Thr3791, Thr3796, Thr3798, Thr3803, Thr3807, Thr3812, Thr3822, Thr3823, Thr3828, Thr3835, Thr3839, Thr3844, Thr3851, Thr3854, Thr3860, Thr3867, Thr3871, Thr3876, Thr3883, Thr3886, Thr3887, Thr3892, Thr3894, Thr3899, Thr3903, Thr3935, Thr3940, Thr3942, Thr3947, Thr3950, Thr3951, Thr3956, Thr3958, Thr3963, Thr3967, Thr3972, Thr3979, Thr3983, Thr3988, Thr3990, Thr3995, Thr3999, Thr4004, Thr4006, Thr4011, Thr4015, and Thr4020. Positions 3473 to 3486 are enriched in polar residues; it reads LPVTSPSSASTGHT. Residues 3493–3517 show a composition bias toward polar residues; that stretch reads IPSSASTGDTSTLPVTGASSASTGH. Residues 3524 to 3550 show a composition bias toward polar residues; the sequence is TDTSSVSTGHATPLPVTSLSSVSTGDT. Residues 3557–3580 show a composition bias toward polar residues; that stretch reads DASSASTGQATPLPVTSLSSVSTG. A compositionally biased stretch (low complexity) spans 3604–3615; it reads TDTSSASTGDTT. Residues 3620–3644 show a composition bias toward polar residues; that stretch reads TDTSSASTGQATPLPVTSLSSVSTG. A compositionally biased stretch (low complexity) spans 3668 to 3679; the sequence is TDTSSASTGDTT. Polar residues predominate over residues 3684 to 3694; that stretch reads TDTSSASTGQA. Residues 3710-3728 are compositionally biased toward low complexity; that stretch reads TTPLPVTSTSSVSTGHVTP. The segment covering 3730-3741 has biased composition (polar residues); sequence HVTSPSSASTGH. The segment covering 3780–3791 has biased composition (low complexity); sequence TDASSASTGDTT. Polar residues predominate over residues 3796-3822; that stretch reads TDTSSASTGQATPLPVTSLSSVSTGDT. Positions 3860 to 3869 are enriched in polar residues; that stretch reads TSPSSASTGH. Residues 3877-3886 are compositionally biased toward polar residues; that stretch reads GLSSASTGDT. The span at 3892–3901 shows a compositional bias: polar residues; it reads TDTSSASTRH. Positions 3940–3951 are enriched in low complexity; the sequence is TSTSSASTGDTT. Positions 3956–3981 are enriched in polar residues; it reads TDTSSVSTGHATSLPVTSRSSASTGH. A compositionally biased stretch (polar residues) spans 3988–3997; that stretch reads TDTSSVSTGH. Positions 3999–4011 are enriched in low complexity; sequence TPLPVTSTSSVST. A compositionally biased stretch (polar residues) spans 4018 to 4029; it reads PVTSPSSASTGH. Ser4021, Ser4023, Ser4024, and Ser4026 each carry an O-linked (GalNAc...) serine glycan. O-linked (GalNAc...) threonine glycans are attached at residues Thr4027, Thr4031, and Thr4036. Residues 4030–4047 show a composition bias toward low complexity; it reads ATPVPVTSTSSASTGDTT. Ser4037 carries O-linked (GalNAc...) serine glycosylation. Thr4038, Thr4043, Thr4046, and Thr4047 each carry an O-linked (GalNAc...) threonine glycan. Positions 4049 to 4093 are enriched in polar residues; it reads LPVTNASSLSTGHATPLHVTSPSSASRGDTSTLPVTDASSASTGH. An N-linked (GlcNAc...) asparagine glycan is attached at Asn4053. Residues Thr4078 and Thr4084 are each glycosylated (O-linked (GalNAc...) threonine). Low complexity predominate over residues 4095 to 4107; the sequence is TPLPLTSLSSVST. Thr4110, Thr4111, Thr4116, Thr4118, Thr4123, Thr4127, Thr4132, Thr4139, Thr4142, Thr4143, Thr4148, Thr4158, Thr4159, Thr4164, Thr4171, Thr4175, Thr4180, Thr4182, Thr4187, Thr4190, Thr4191, Thr4196, Thr4198, Thr4203, Thr4207, Thr4212, Thr4214, Thr4219, Thr4223, and Thr4239 each carry an O-linked (GalNAc...) threonine glycan. Polar residues predominate over residues 4116–4142; sequence TDTSSASTGQATPLPVTSLSSVSTGDT. Residues 4149–4173 show a composition bias toward polar residues; that stretch reads IPSSASSGHTTSLPVTDASSVSTGH. Residues 4180-4191 are compositionally biased toward low complexity; sequence TSTSSASTGDTT. Over residues 4196–4205 the composition is skewed to polar residues; the sequence is TDTSSASTGH. Residues 4212 to 4223 are compositionally biased toward polar residues; the sequence is TDTSSASTGHAT. Residues 4242-4254 show a composition bias toward low complexity; sequence AVSSATSASTVSS. Residues 4242-4288 form a disordered region; it reads AVSSATSASTVSSDSPLKMETPGMTTPSLKTDGGRRTATSPPPTTSQ. 6 O-linked (GalNAc...) threonine glycosylation sites follow: Thr4272, Thr4278, Thr4280, Thr4289, Thr4293, and Thr4297. The region spanning 4397–4552 is the NIDO domain; the sequence is PFWDDADFST…GLQFYRLHRE (156 aa). Positions 4553-4668 constitute an AMOP domain; the sequence is ERPNYRLECL…YLCALYQQRR (116 aa). A VWFD domain is found at 4680–4880; sequence QPAWMFGDPH…TWQINGTGLL (201 aa). Asn4715, Asn4768, Asn4787, Asn4796, Asn4831, Asn4852, Asn4875, Asn4902, Asn4928, Asn4946, Asn4982, Asn4997, Asn5045, Asn5052, Asn5100, and Asn5119 each carry an N-linked (GlcNAc...) asparagine glycan. One can recognise an EGF-like 1 domain in the interval 5118–5157; sequence QNQSCPVNYCYNQGHCYISQTLGCQPMCTCPPAFTDSRCF. Disulfide bonds link Cys5122/Cys5133, Cys5127/Cys5145, and Cys5147/Cys5156. Asn5185, Asn5192, and Asn5292 each carry an N-linked (GlcNAc...) asparagine glycan. The EGF-like 2 domain occupies 5321 to 5360; sequence VSPCSRGYCDHGGQCQHLPSGPRCSCVSFSIYTAWGEHCE. Disulfide bonds link Cys5324–Cys5335, Cys5329–Cys5344, and Cys5346–Cys5359. A helical transmembrane segment spans residues 5369–5389; sequence FFGIFFGALGGLLLLGVGTFV.

In terms of assembly, a heterodimeric complex, composed of a mucin-4 alpha chain and a cysteine-rich transmembrane mucin-4 beta chain. Mucin-4 beta chain interacts with ERBB2 via the EGF-like domain 1. In nonpolarized cells, associates with ERBB2 and ERBB3. Proteolytically cleaved into 2 chains, mucin-4 alpha chain and mucin-4 beta chain. In terms of processing, highly O-glycosylated. Post-translationally, is predominantly N-glycosylated. Expressed in the thymus, thyroid, lung, trachea, esophagus, stomach, small intestine, colon, testis, prostate, ovary, uterus, placenta, and mammary and salivary glands. Expressed in carcinomas arising from some of these epithelia, such as lung cancers, squamous cell carcinomas of the upper aerodigestive tract, mammary carcinomas, biliary tract, colon, and cervix cancers. Minimally or not expressed in the normal pancreas or chronic pancreatitis, but is highly expressed in pancreatic tumors and pancreatic tumor cell lines.

Its subcellular location is the cell membrane. It localises to the secreted. Functionally, membrane-bound mucin, a family of highly glycosylated proteins that constitute the major component of the mucus, the slimy and viscous secretion covering epithelial surfaces. These glycoproteins play important roles in the protection of the epithelium and are implicated in epithelial renewal and differentiation. Regulates cellular behavior through both anti-adhesive effects on cell-cell and cell-extracellular matrix interactions and its ability to act as an intramembrane ligand for ERBB2. Plays an important role in proliferation and differentiation of epithelial cells by inducing specific phosphorylation of ERBB2. In polarized epithelial cells, segregates ERBB2 and other ERBB receptors and prevents ERBB2 from acting as a coreceptor. The interaction with ERBB2 leads to enhanced expression of CDKN1B. The formation of a MUC4-ERBB2-ERBB3-NRG1 complex leads to down-regulation of CDKN1B, resulting in repression of apoptosis and stimulation of proliferation. Its ability to promote tumor growth may be mainly due to repression of apoptosis as opposed to proliferation. This Homo sapiens (Human) protein is Mucin-4 (MUC4).